Reading from the N-terminus, the 602-residue chain is Aspartate--tRNA(Asp/Asn) ligase (602 aa).

Glutamate 191 contributes to the L-aspartate binding site. The interval glutamine 215 to lysine 218 is aspartate. Position 237 (arginine 237) interacts with L-aspartate. ATP contacts are provided by residues arginine 237 to glutamate 239 and glutamine 246. L-aspartate is bound at residue histidine 465. Glutamate 499 is a binding site for ATP. L-aspartate is bound at residue arginine 506. Glycine 551–arginine 554 serves as a coordination point for ATP.

This sequence belongs to the class-II aminoacyl-tRNA synthetase family. Type 1 subfamily. As to quaternary structure, homodimer.

Its subcellular location is the cytoplasm. It carries out the reaction tRNA(Asx) + L-aspartate + ATP = L-aspartyl-tRNA(Asx) + AMP + diphosphate. Its function is as follows. Aspartyl-tRNA synthetase with relaxed tRNA specificity since it is able to aspartylate not only its cognate tRNA(Asp) but also tRNA(Asn). Reaction proceeds in two steps: L-aspartate is first activated by ATP to form Asp-AMP and then transferred to the acceptor end of tRNA(Asp/Asn). The protein is Aspartate--tRNA(Asp/Asn) ligase of Treponema pallidum (strain Nichols).